A 166-amino-acid polypeptide reads, in one-letter code: MAQEDVTAVATNGAGPVETHLVFTEFKQMLLVEAQKVGDAVTFYKSAFGAIESGHSLYPKRKLDQELPHVLSSELNLAGSSFVVCDVSSLPGFSTAKSEGSGVTFLLGTKDAEAAVAKAVDAGAVKVEVTEAEVELGFKGKVTDPFGVTWIFAEKKTVITDENKEV.

Position 2 is an N-acetylalanine (alanine 2).

In terms of assembly, homodimer.

This is an uncharacterized protein from Arabidopsis thaliana (Mouse-ear cress).